A 953-amino-acid chain; its full sequence is Zinc finger protein 507 (953 aa).

Position 95 is a phosphoserine (Ser95). C2H2-type zinc fingers lie at residues 125–147 (YQCS…IKQH), 155–185 (LMCS…ANIH), and 248–270 (YRCL…AWKH). Ser427 carries the phosphoserine modification. Positions 470–489 (KGLATDENAPPGRRRTNSES) are disordered. 5 C2H2-type zinc fingers span residues 641 to 663 (YRCR…LRVH), 669 to 691 (YQCP…MIHH), 697 to 720 (YQCK…REQH), 758 to 780 (YRCD…RRIH), and 786 to 808 (YRCS…MWKH). The tract at residues 831 to 891 (GRVLGKTPGK…KLSPTSNTSY (61 aa)) is disordered. The segment covering 854-891 (TGSSENAVSSSELMSQTPSEVLGTNENEKLSPTSNTSY) has biased composition (polar residues). Residues 911–933 (FCCCICGFESTSKENLLDHMKEH) form a C2H2-type 9 zinc finger.

This sequence belongs to the krueppel C2H2-type zinc-finger protein family.

It localises to the nucleus. Its function is as follows. May be involved in transcriptional regulation. The chain is Zinc finger protein 507 (ZNF507) from Pongo abelii (Sumatran orangutan).